Consider the following 358-residue polypeptide: 3-dehydroquinate synthase (358 aa).

NAD(+) is bound by residues Gly102–Asp106, Thr126–Thr127, Lys138, and Lys147. Zn(2+) is bound by residues Glu180, His243, and His260.

Belongs to the sugar phosphate cyclases superfamily. Dehydroquinate synthase family. It depends on Co(2+) as a cofactor. Zn(2+) is required as a cofactor. Requires NAD(+) as cofactor.

Its subcellular location is the cytoplasm. It catalyses the reaction 7-phospho-2-dehydro-3-deoxy-D-arabino-heptonate = 3-dehydroquinate + phosphate. It functions in the pathway metabolic intermediate biosynthesis; chorismate biosynthesis; chorismate from D-erythrose 4-phosphate and phosphoenolpyruvate: step 2/7. In terms of biological role, catalyzes the conversion of 3-deoxy-D-arabino-heptulosonate 7-phosphate (DAHP) to dehydroquinate (DHQ). In Shouchella clausii (strain KSM-K16) (Alkalihalobacillus clausii), this protein is 3-dehydroquinate synthase.